The primary structure comprises 190 residues: Hypoxanthine/guanine phosphoribosyltransferase (190 aa).

This sequence belongs to the purine/pyrimidine phosphoribosyltransferase family. Archaeal HPRT subfamily. In terms of assembly, homodimer.

It localises to the cytoplasm. It catalyses the reaction IMP + diphosphate = hypoxanthine + 5-phospho-alpha-D-ribose 1-diphosphate. It carries out the reaction GMP + diphosphate = guanine + 5-phospho-alpha-D-ribose 1-diphosphate. It participates in purine metabolism; IMP biosynthesis via salvage pathway; IMP from hypoxanthine: step 1/1. Functionally, catalyzes a salvage reaction resulting in the formation of IMP that is energically less costly than de novo synthesis. This is Hypoxanthine/guanine phosphoribosyltransferase from Methanosarcina barkeri (strain Fusaro / DSM 804).